A 63-amino-acid polypeptide reads, in one-letter code: Adipokinetic prohormone type 1 (63 aa).

An N-terminal signal peptide occupies residues 1–22 (MVQRCLVVALLVVVVAAALCSA). Residue Gln23 is modified to Pyrrolidone carboxylic acid. Thr32 carries the post-translational modification Threonine amide.

It belongs to the AKH/HRTH/RPCH family. In terms of assembly, adipokinetic hormone precursor-related peptide (APRP) can form three type of disulfide-bond dimers: p1 (alpha-alpha), p2 (alpha-beta), and p3 (beta-beta).

The protein resides in the secreted. Its function is as follows. This hormone, released from cells in the corpora cardiaca, causes release of diglycerides from the fat body and stimulation of muscles to use these diglycerides as an energy source during energy-demanding processes. This chain is Adipokinetic prohormone type 1, found in Schistocerca nitens (Vagrant locust).